The sequence spans 411 residues: Imidazolonepropionase (411 aa).

Fe(3+)-binding residues include H75 and H77. Residues H75 and H77 each contribute to the Zn(2+) site. 4-imidazolone-5-propanoate contacts are provided by R84, Y147, and H180. N-formimidoyl-L-glutamate is bound at residue Y147. H245 lines the Fe(3+) pocket. H245 contacts Zn(2+). Q248 lines the 4-imidazolone-5-propanoate pocket. D320 contacts Fe(3+). D320 contributes to the Zn(2+) binding site. N322 and G324 together coordinate N-formimidoyl-L-glutamate. Position 325 (T325) interacts with 4-imidazolone-5-propanoate.

This sequence belongs to the metallo-dependent hydrolases superfamily. HutI family. Zn(2+) is required as a cofactor. The cofactor is Fe(3+).

It is found in the cytoplasm. It carries out the reaction 4-imidazolone-5-propanoate + H2O = N-formimidoyl-L-glutamate. It participates in amino-acid degradation; L-histidine degradation into L-glutamate; N-formimidoyl-L-glutamate from L-histidine: step 3/3. Its function is as follows. Catalyzes the hydrolytic cleavage of the carbon-nitrogen bond in imidazolone-5-propanoate to yield N-formimidoyl-L-glutamate. It is the third step in the universal histidine degradation pathway. This Aeromonas hydrophila subsp. hydrophila (strain ATCC 7966 / DSM 30187 / BCRC 13018 / CCUG 14551 / JCM 1027 / KCTC 2358 / NCIMB 9240 / NCTC 8049) protein is Imidazolonepropionase.